Reading from the N-terminus, the 154-residue chain is Pseudo histidine-containing phosphotransfer protein 6 (154 aa).

Methionine 1 is modified (N-acetylmethionine). Residues 41 to 137 (SPNFVYDVIN…HYLKNMMHEL (97 aa)) form the HPt domain.

As to quaternary structure, interacts with AHK5.

It is found in the cytoplasm. Its subcellular location is the cytosol. The protein resides in the nucleus. Functionally, functions as a two-component phosphorelay mediator between cytokinin sensor histidine kinases and response regulators (B-type ARRs). Plays an important role in propagating cytokinin signal transduction. This Arabidopsis thaliana (Mouse-ear cress) protein is Pseudo histidine-containing phosphotransfer protein 6 (AHP6).